A 358-amino-acid polypeptide reads, in one-letter code: Peptide chain release factor 1 (358 aa).

Glutamine 234 carries the post-translational modification N5-methylglutamine.

This sequence belongs to the prokaryotic/mitochondrial release factor family. Methylated by PrmC. Methylation increases the termination efficiency of RF1.

The protein localises to the cytoplasm. Functionally, peptide chain release factor 1 directs the termination of translation in response to the peptide chain termination codons UAG and UAA. This chain is Peptide chain release factor 1, found in Chloroherpeton thalassium (strain ATCC 35110 / GB-78).